Here is a 202-residue protein sequence, read N- to C-terminus: Putative NADH dehydrogenase/NAD(P)H nitroreductase SCO7141 (202 aa).

The protein belongs to the nitroreductase family. HadB/RutE subfamily. Requires FMN as cofactor.

This chain is Putative NADH dehydrogenase/NAD(P)H nitroreductase SCO7141, found in Streptomyces coelicolor (strain ATCC BAA-471 / A3(2) / M145).